The primary structure comprises 354 residues: Uroporphyrinogen decarboxylase (354 aa).

Substrate is bound by residues 27–31, aspartate 77, tyrosine 153, threonine 208, and histidine 326; that span reads RQAGR.

Belongs to the uroporphyrinogen decarboxylase family. In terms of assembly, homodimer.

It localises to the cytoplasm. It carries out the reaction uroporphyrinogen III + 4 H(+) = coproporphyrinogen III + 4 CO2. It participates in porphyrin-containing compound metabolism; protoporphyrin-IX biosynthesis; coproporphyrinogen-III from 5-aminolevulinate: step 4/4. Its function is as follows. Catalyzes the decarboxylation of four acetate groups of uroporphyrinogen-III to yield coproporphyrinogen-III. This Neisseria meningitidis serogroup C / serotype 2a (strain ATCC 700532 / DSM 15464 / FAM18) protein is Uroporphyrinogen decarboxylase.